The sequence spans 491 residues: Cytochrome P450 2K3 (491 aa).

Cysteine 434 contacts heme.

Belongs to the cytochrome P450 family. Heme is required as a cofactor.

Its subcellular location is the endoplasmic reticulum membrane. It localises to the microsome membrane. It carries out the reaction an organic molecule + reduced [NADPH--hemoprotein reductase] + O2 = an alcohol + oxidized [NADPH--hemoprotein reductase] + H2O + H(+). The polypeptide is Cytochrome P450 2K3 (cyp2k3) (Oncorhynchus mykiss (Rainbow trout)).